Reading from the N-terminus, the 471-residue chain is Variant surface glycoprotein WRATAT A (471 aa).

The signal sequence occupies residues 1 to 18 (MSVLFLLLAITRTASVKA). N-linked (GlcNAc...) asparagine glycans are attached at residues Asn61 and Asn133. Residues 373-457 (QEQTLATTGT…ANTTGSSNSF (85 aa)) form a disordered region. Residues 379 to 392 (TTGTKSSSPQSTQQ) are compositionally biased toward low complexity. Cystine bridges form between Cys401–Cys414 and Cys410–Cys427. Over residues 401–447 (CNDKAKETECNSPCKWDKEEKDEKKRCKLSEEGKQAEKENQEGKDGK) the composition is skewed to basic and acidic residues. Over residues 448–457 (ANTTGSSNSF) the composition is skewed to polar residues. Residue Asn449 is glycosylated (N-linked (GlcNAc...) asparagine). The GPI-anchor amidated serine moiety is linked to residue Ser454. A propeptide spans 455 to 471 (NSFVIKTSPLLLAVLLL) (removed in mature form).

Its subcellular location is the cell membrane. Functionally, VSG forms a coat on the surface of the parasite. The trypanosome evades the immune response of the host by expressing a series of antigenically distinct VSGs from an estimated 1000 VSG genes. In Trypanosoma brucei rhodesiense, this protein is Variant surface glycoprotein WRATAT A.